The following is a 760-amino-acid chain: MKKTIQILLFFFFLINLTNALSISSDGGVLSDNEVRHIQRRQLLEFAERSVKITVDPSLNFENPRLRNAYIALQAWKQAILSDPNNFTSNWIGSNVCNYTGVFCSPALDNRKIRTVAGIDLNHADIAGYLPEELGLLSDLALFHVNSNRFCGTVPHRFNRLKLLFELDLSNNRFAGKFPTVVLQLPSLKFLDLRFNEFEGTVPKELFSKDLDAIFINHNRFRFELPENFGDSPVSVIVLANNRFHGCVPSSLVEMKNLNEIIFMNNGLNSCLPSDIGRLKNVTVFDVSFNELVGPLPESVGEMVSVEQLNVAHNMLSGKIPASICQLPKLENFTYSYNFFTGEAPVCLRLPEFDDRRNCLPGRPAQRSPGQCKAFLSRPPVNCGSFSCGRSVSPRPPVVTPLPPPSLPSPPPPAPIFSTPPTLTSPPPPSPPPPVYSPPPPPPPPPPVYSPPPPPPPPPPPPVYSPPPPPPPPPPPPPVYSPPPPSPPPPPPPVYSPPPPPPPPPPPPVYSPPPPPVYSSPPPPPSPAPTPVYCTRPPPPPPHSPPPPQFSPPPPEPYYYSSPPPPHSSPPPHSPPPPHSPPPPIYPYLSPPPPPTPVSSPPPTPVYSPPPPPPCIEPPPPPPCIEYSPPPPPPVVHYSSPPPPPVYYSSPPPPPVYYSSPPPPPPVHYSSPPPPEVHYHSPPPSPVHYSSPPPPPSAPCEESPPPAPVVHHSPPPPMVHHSPPPPVIHQSPPPPSPEYEGPLPPVIGVSYASPPPPPFY.

The N-terminal stretch at 1–20 is a signal peptide; the sequence is MKKTIQILLFFFFLINLTNA. N-linked (GlcNAc...) asparagine glycosylation occurs at N16. Residues 21–45 form an LRR 1 repeat; it reads LSISSDGGVLSDNEVRHIQRRQLLE. N86 and N98 each carry an N-linked (GlcNAc...) asparagine glycan. 9 LRR repeats span residues 113 to 137, 138 to 160, 161 to 185, 186 to 209, 211 to 232, 234 to 255, 256 to 279, 281 to 303, and 304 to 327; these read IRTV…LGLL, SDLA…RFNR, LKLL…VLQL, PSLK…LFSK, LDAI…FGDS, VSVI…LVEM, KNLN…IGRL, NVTV…VGEM, and VSVE…ICQL. N281 carries N-linked (GlcNAc...) asparagine glycosylation. N332 is a glycosylation site (N-linked (GlcNAc...) asparagine). Disordered stretches follow at residues 389-502, 515-610, and 663-748; these read GRSV…PPPP, PPVY…YSPP, and PPPP…PVIG. Composition is skewed to pro residues over residues 394–415 and 423–502; these read PRPP…PPAP and LTSP…PPPP. The interval 409-758 is contains the Ser-Pro(4) repeats; the sequence is SPPPPAPIFS…VSYASPPPPP (350 aa). Residues 663–745 are compositionally biased toward pro residues; that stretch reads PPPPVHYSSP…SPEYEGPLPP (83 aa).

As to quaternary structure, interacts with SH3P1. Hydroxylated on proline residues in the S-P-P-P-P repeat. In terms of processing, O-glycosylated on hydroxyprolines. As to expression, expressed in roots, stems, leaves and flowers, mostly in vascular tissues.

It localises to the secreted. Its subcellular location is the cell wall. Its function is as follows. Modulates cell morphogenesis by regulating cell wall formation and assembly, and/or growth polarization. This chain is Leucine-rich repeat extensin-like protein 3 (LRX3), found in Arabidopsis thaliana (Mouse-ear cress).